Reading from the N-terminus, the 295-residue chain is MSLFNVSNGLRTALRPSVASSSRVAAFSTTAAARLATPTSDNVGSSGKPQHLKQFKIYRWNPDKPSEKPRLQSYTLDLNQTGPMVLDALIKIKNEIDPTLTFRRSCREGICGSCAMNIDGVNTLACLCRIDKQNDTKIYPLPHMYIVKDLVPDLTQFYKQYRSIEPFLKSNNTPSEGEHLQSPEERRRLDGLYECILCACCSTSCPSYWWNQDEYLGPAVLMQAYRWMADSRDDFGEERRQKLENTFSLYRCHTIMNCSRTCPKNLNPGKAIAQIKKDMAVGAPKASERPIMASS.

Residues 67–144 (EKPRLQSYTL…DTKIYPLPHM (78 aa)) form the 2Fe-2S ferredoxin-type domain. Positions 106, 111, 114, and 126 each coordinate [2Fe-2S] cluster. The 31-residue stretch at 185–215 (ERRRLDGLYECILCACCSTSCPSYWWNQDEY) folds into the 4Fe-4S ferredoxin-type domain. Cys195, Cys198, and Cys201 together coordinate [4Fe-4S] cluster. Cys205 is a [3Fe-4S] cluster binding site. Trp210 provides a ligand contact to a ubiquinone. Positions 252 and 258 each coordinate [3Fe-4S] cluster. A [4Fe-4S] cluster-binding site is contributed by Cys262.

Belongs to the succinate dehydrogenase/fumarate reductase iron-sulfur protein family. Component of complex II composed of four subunits: a flavoprotein (FP), an iron-sulfur protein (IP), and a cytochrome b composed of a large and a small subunit. [2Fe-2S] cluster is required as a cofactor. [3Fe-4S] cluster serves as cofactor. It depends on [4Fe-4S] cluster as a cofactor.

It localises to the mitochondrion inner membrane. It carries out the reaction a quinone + succinate = fumarate + a quinol. Its pathway is carbohydrate metabolism; tricarboxylic acid cycle; fumarate from succinate (eukaryal route): step 1/1. Functionally, iron-sulfur protein (IP) subunit of succinate dehydrogenase (SDH) that is involved in complex II of the mitochondrial electron transport chain and is responsible for transferring electrons from succinate to ubiquinone (coenzyme Q). This Mycosarcoma maydis (Corn smut fungus) protein is Succinate dehydrogenase [ubiquinone] iron-sulfur subunit, mitochondrial (SDH2).